Consider the following 534-residue polypeptide: Endoglucanase 5 (534 aa).

The N-terminal stretch at 1 to 27 (MSDVSGRFVVAAAVVAVSLAMAAAAAA) is a signal peptide. Asp82 acts as the Nucleophile in catalysis. Residues His432, Asp484, and Glu493 contribute to the active site. The tract at residues 515–534 (RRRGEDAPPSSTSPVAEDDL) is disordered.

It belongs to the glycosyl hydrolase 9 (cellulase E) family.

The protein resides in the secreted. It catalyses the reaction Endohydrolysis of (1-&gt;4)-beta-D-glucosidic linkages in cellulose, lichenin and cereal beta-D-glucans.. This is Endoglucanase 5 from Oryza sativa subsp. japonica (Rice).